The primary structure comprises 59 residues: Large ribosomal subunit protein uL30 (59 aa).

Belongs to the universal ribosomal protein uL30 family. Part of the 50S ribosomal subunit.

This is Large ribosomal subunit protein uL30 from Nocardia farcinica (strain IFM 10152).